We begin with the raw amino-acid sequence, 131 residues long: ATP synthase epsilon chain (131 aa).

This sequence belongs to the ATPase epsilon chain family. As to quaternary structure, F-type ATPases have 2 components, CF(1) - the catalytic core - and CF(0) - the membrane proton channel. CF(1) has five subunits: alpha(3), beta(3), gamma(1), delta(1), epsilon(1). CF(0) has three main subunits: a, b and c.

Its subcellular location is the cell inner membrane. Produces ATP from ADP in the presence of a proton gradient across the membrane. This chain is ATP synthase epsilon chain, found in Helicobacter hepaticus (strain ATCC 51449 / 3B1).